The following is a 116-amino-acid chain: Putative iron-sulfur cluster insertion protein ErpA (116 aa).

Iron-sulfur cluster-binding residues include C44, C108, and C110.

This sequence belongs to the HesB/IscA family. Homodimer. The cofactor is iron-sulfur cluster.

Its function is as follows. Required for insertion of 4Fe-4S clusters. In Janthinobacterium sp. (strain Marseille) (Minibacterium massiliensis), this protein is Putative iron-sulfur cluster insertion protein ErpA.